A 264-amino-acid chain; its full sequence is Probable pectate lyase D (264 aa).

The first 17 residues, 1–17 (MFFKQLAVLSFATSALA), serve as a signal peptide directing secretion. N-linked (GlcNAc...) asparagine glycosylation occurs at Asn-60. Positions 234-264 (YEGTDNNDEEPQEISTGPSNACQYTDPLPSC) are disordered. Residues 235 to 245 (EGTDNNDEEPQ) show a composition bias toward acidic residues. Residues 246-256 (EISTGPSNACQ) show a composition bias toward polar residues.

This sequence belongs to the polysaccharide lyase 3 family. Ca(2+) is required as a cofactor.

The protein localises to the secreted. It carries out the reaction Eliminative cleavage of (1-&gt;4)-alpha-D-galacturonan to give oligosaccharides with 4-deoxy-alpha-D-galact-4-enuronosyl groups at their non-reducing ends.. Functionally, pectinolytic enzyme consist of four classes of enzymes: pectin lyase, polygalacturonase, pectin methylesterase and rhamnogalacturonase. Among pectinolytic enzymes, pectin lyase is the most important in depolymerization of pectin, since it cleaves internal glycosidic bonds of highly methylated pectins. Favors pectate, the anion, over pectin, the methyl ester. The chain is Probable pectate lyase D (plyD) from Emericella nidulans (strain FGSC A4 / ATCC 38163 / CBS 112.46 / NRRL 194 / M139) (Aspergillus nidulans).